The sequence spans 361 residues: Free fatty acid receptor 4 (361 aa).

Topologically, residues 1-45 (MSPECARAAGDAPLRSLEQANRTRFSFFSDVKGDHRLLLAAVETT) are extracellular. Asn21 carries N-linked (GlcNAc...) asparagine glycosylation. A helical membrane pass occupies residues 46 to 66 (VLALIFAVSLLGNVCALVLVA). Residues 67–77 (RRRRRGTTACL) are Cytoplasmic-facing. The chain crosses the membrane as a helical span at residues 78 to 98 (VLNLFCADLLFISAIPLVLAV). Residues 99–112 (RWTEAWLLGPVACH) are Extracellular-facing. Cys111 and Cys194 are oxidised to a cystine. Residues 113–133 (LLFYLMTLSGSVTILTLAAVS) form a helical membrane-spanning segment. Residues 134 to 156 (LERMVCIVHLQRGVRGPGRRARA) are Cytoplasmic-facing. Residues 157–177 (VLLTLIWGYSAVAALPLCVFF) form a helical membrane-spanning segment. The Extracellular segment spans residues 178-204 (RVVPQRLPGADQEISICTLIWPTIAGE). The chain crosses the membrane as a helical span at residues 205 to 225 (ISWDVSFVTLNFLVPGLVIVI). At 226-268 (SYSKILQITKASRKRLTVSLAYSESHQIRVSQQDFRLFRTLFL) the chain is on the cytoplasmic side. A helical membrane pass occupies residues 269–289 (LMVSFFIMWSPIIITILLILI). The Extracellular portion of the chain corresponds to 290–295 (QNFKQD). A helical membrane pass occupies residues 296–316 (LVIWPSLFFWVVAFTFANSAL). Over 317-361 (NPILYNMTLCRNEWKKIFCCFWFPEKGAILTDTSVKRNDLSVISG) the chain is Cytoplasmic. Phosphothreonine is present on residues Thr347 and Thr349. 3 positions are modified to phosphoserine: Ser350, Ser357, and Ser360.

It belongs to the G-protein coupled receptor 1 family. In terms of assembly, interacts (via C-terminus) with ARRB2 following LCFAs stimulation. Phosphorylated at two clusters of Ser and Thr residues located in the intracellular C-terminus. Prerequisite for FFAR4 internalization via an ARRB2-dependent pathway. In terms of tissue distribution, highly expressed in lung and colon.

The protein localises to the cell membrane. It is found in the endosome membrane. It localises to the lysosome membrane. Its subcellular location is the cell projection. The protein resides in the cilium membrane. G-protein-coupled receptor for long-chain fatty acids (LCFAs) with a major role in adipogenesis, energy metabolism and inflammation. Signals via G-protein and beta-arrestin pathways. LCFAs sensing initiates activation of phosphoinositidase C-linked G proteins GNAQ and GNA11 (G(q)/G(11)), inducing a variety of cellular responses via second messenger pathways such as intracellular calcium mobilization, modulation of cyclic adenosine monophosphate (cAMP) production, and mitogen-activated protein kinases (MAPKs). After LCFAs binding, associates with beta-arrestin ARRB2 that acts as an adapter protein coupling the receptor to specific downstream signaling pathways, as well as mediating receptor endocytosis. In response to dietary fats, plays an important role in the regulation of adipocyte proliferation and differentiation. Acts as a receptor for omega-3 polyunsaturated fatty acids (PUFAs) at primary cilium of perivascular preadipocytes, initiating an adipogenic program via cAMP and CTCF-dependent chromatin remodeling that ultimately results in transcriptional activation of adipogenic genes and cell cycle entry. Induces differentiation of brown and beige adipocytes probably via autocrine and endocrine functions of FGF21 hormone. Contributes to the thermogenic activation of brown adipose tissue and the browning of white adipose tissue. Activates brown adipocytes by initiating intracellular calcium signaling leading to mitochondrial depolarization and fission, and overall increased mitochondrial respiration. Consequently stimulates fatty acid uptake and oxidation in mitochondria together with UCP1-mediated thermogenic respiration, eventually reducing fat mass. Regulates bi-potential differentiation of bone marrow mesenchymal stem cells toward osteoblasts or adipocytes likely by up-regulating distinct integrins. In response to dietary fats regulates hormone secretion and appetite. Stimulates GIP and GLP1 secretion from enteroendocrine cells as well as GCG secretion in pancreatic alpha cells, thereby playing a role in the regulation of blood glucose levels. Negatively regulates glucose-induced SST secretion in pancreatic delta cells. Mediates LCFAs inhibition of GHRL secretion, an appetite-controlling hormone. In taste buds, contributes to sensing of dietary fatty acids by the gustatory system. During the inflammatory response, promotes anti-inflammatory M2 macrophage differentiation in adipose tissue. Mediates the anti-inflammatory effects of omega-3 PUFAs via inhibition of NLRP3 inflammasome activation. In this pathway, interacts with adapter protein ARRB2 and inhibits the priming step triggered by Toll-like receptors (TLRs) at the level of TAK1 and TAB1. Further inhibits the activation step when ARRB2 directly associates with NLRP3, leading to inhibition of pro-inflammatory cytokine release. Mediates LCFAs anti-apoptotic effects. This Macaca fascicularis (Crab-eating macaque) protein is Free fatty acid receptor 4 (FFAR4).